Here is a 364-residue protein sequence, read N- to C-terminus: MAQQTPLYEQHTLCGARMVDFHGWMMPLHYGSQIDEHHAVRTDAGMFDVSHMTIVDLRGSRTREFLRYLLANDVAKLKTPGKALYSGMLNASGGVIDDLIVYYFTEDFFRLVVNSATREKDLSWISQHAEKYAVEITVRDDLSLIAVQGPNAQAKAATLFTDEQRHATEGMKPFFGVQAGDLFIATTGYTGEAGYEIAMPNEKAAEFWHALVEAGVKPAGLGARDTLRLEAGMNLYSQEMDETVSPLAANMGWTIAWEPADREFIGREALEMQREKGTDQLVGLVMTEKGVLRNELPVRFTDELGNQREGMITSGTFSPTLGYSIALARVPAGIGETAIVQIRNREMPVNVTKPIFVRAGKPVA.

Belongs to the GcvT family. In terms of assembly, the glycine cleavage system is composed of four proteins: P, T, L and H.

It catalyses the reaction N(6)-[(R)-S(8)-aminomethyldihydrolipoyl]-L-lysyl-[protein] + (6S)-5,6,7,8-tetrahydrofolate = N(6)-[(R)-dihydrolipoyl]-L-lysyl-[protein] + (6R)-5,10-methylene-5,6,7,8-tetrahydrofolate + NH4(+). Functionally, the glycine cleavage system catalyzes the degradation of glycine. This Enterobacter sp. (strain 638) protein is Aminomethyltransferase.